We begin with the raw amino-acid sequence, 954 residues long: Mycolic acid-containing lipids exporter MmpL11 (954 aa).

12 consecutive transmembrane segments (helical) span residues 11-31 (FRWA…YLAL), 188-208 (IVLI…LPLV), 214-234 (VVVT…SVFV), 235-255 (TSTV…FILM), 279-299 (GLAV…IYLI), 312-334 (ILAV…ATFG), 373-393 (AIAA…MVLG), 529-549 (TQPL…LVSI), 559-579 (VLMT…VFQW), 597-617 (IPPL…IFLL), 648-668 (AALI…PLVA), and 670-690 (LGVA…LVLV).

It is found in the cell inner membrane. In terms of biological role, contributes to cell wall biosynthesis and biofilm formation. Transports the mycolic acid-containing lipids monomeromycolyl diacylglycerol (MMDAG) and mycolate ester wax (WE) to the bacterial surface. The protein is Mycolic acid-containing lipids exporter MmpL11 of Mycolicibacterium smegmatis (strain ATCC 700084 / mc(2)155) (Mycobacterium smegmatis).